A 443-amino-acid chain; its full sequence is Squalene synthase (443 aa).

2 consecutive transmembrane segments (helical) span residues 291-311 (TSFN…ELVF) and 423-443 (ILLL…VRII).

This sequence belongs to the phytoene/squalene synthase family. Mg(2+) serves as cofactor.

The protein localises to the endoplasmic reticulum membrane. The catalysed reaction is 2 (2E,6E)-farnesyl diphosphate + NADPH + H(+) = squalene + 2 diphosphate + NADP(+). The enzyme catalyses 2 (2E,6E)-farnesyl diphosphate + NADH + H(+) = squalene + 2 diphosphate + NAD(+). The protein operates within terpene metabolism; lanosterol biosynthesis; lanosterol from farnesyl diphosphate: step 1/3. Its function is as follows. Catalyzes the condensation of 2 two farnesyl pyrophosphate moieties to form squalene. It is the first committed enzyme of the sterol biosynthesis pathway. Required for the biosynthesis of ergosterol. This Cyberlindnera jadinii (Torula yeast) protein is Squalene synthase (ERG9).